The sequence spans 941 residues: MSMSFSGGTHNDRWGSDLASAGEFTQSFPSLPATYSPSPSSSSSSGEELLEVTIEFPSGVIINIDSVTGTGTDISGTDLEITSCSDSGSGSRSLSLGWSASSERLTAGTNSKQQIQKISRRGYGYSSRSAPEPVVPHRGEITDSVNLPRALSQRPTRPNRDGSGTERAIHGLKFISSKENGIVDWNDVQNNFAHLSKDGYLFKSDFAHCIGLENENSKEFADELFDALCRRRRIMVDKINLQELYEFWYQITDESFDSRLQIFFNMVKNGDGRITENEVKEIIILSASANNLSRLRERAEEYAALIMEELAPDGLYSQYIELKDLEILLLEKDISHSYSLPFSQTSRALSQNLKDRRWRMSRNLLYSLQDNWKRIWVLTLWFVIMAWLFMWKCYQYKHKDAFHVMGYCLVMAKGAAETLKFNMALILLPVCRNTITYLRSTALSHSVPFDDCINFHKTISVAIISAMLLHATSHLACDFPRILASTDTDYKRYLVKYFGVTRPTYFGLVNTPVGITGIIMVAFMLIAFTLASRRCRRNLTKLPKPFDKLTGYNAFWYSHHLLLTVYVLLVIHGVSLYLEHKWYRKTVWMYLAVPVLLYVGERIFRFFRSRLYTVEICKVVIYPGNVVVLRMSKPTSFDYKSGQYVFVQCPSVSKFEWHPFSITSSPGDDYLSIHIRQRGDWTEGIKKAFSVVCHAPEAGKSGLLRADVPNQRSFPELLIDGPYGAPAQDHWKYDVVLLVGLGIGATPFVSILRDLLNNIIKQQEQAECISGSCSNSNISSDHSFSCLNSEAASRIPQTQRKTLNTKNAYFYWVTREQGSFDWFKEIMNEIADSDRKGVIEMHNYLTSVYEEGDTRSNLLTMIQTLNHAKNGVDIFSGTKVRTHFGRPKWKKVLSKISTKHRNARIGVFYCGVPSLGKELSTLCHEFNQTGITRFDFHKEQF.

The Cytoplasmic segment spans residues 1–374; sequence MSMSFSGGTH…LYSLQDNWKR (374 aa). 2 disordered regions span residues 29–48 and 103–166; these read PSLPATYSPSPSSSSSSGEE and ERLT…SGTE. Over residues 36-45 the composition is skewed to low complexity; the sequence is SPSPSSSSSS. Positions 103–117 are enriched in polar residues; that stretch reads ERLTAGTNSKQQIQK. 2 EF-hand-like regions span residues 196–204 and 232–243; these read SKDGYLFKS and RRIMVDKINLQE. The EF-hand domain occupies 254–289; it reads ESFDSRLQIFFNMVKNGDGRITENEVKEIIILSASA. Positions 269, 271, 273, and 278 each coordinate Ca(2+). Phosphoserine is present on residues S346 and S350. Residues 375–395 form a helical membrane-spanning segment; that stretch reads IWVLTLWFVIMAWLFMWKCYQ. The Extracellular portion of the chain corresponds to 396–407; sequence YKHKDAFHVMGY. The helical transmembrane segment at 408-428 threads the bilayer; the sequence is CLVMAKGAAETLKFNMALILL. The region spanning 413 to 570 is the Ferric oxidoreductase domain; that stretch reads KGAAETLKFN…LLLTVYVLLV (158 aa). At 429-514 the chain is on the cytoplasmic side; the sequence is PVCRNTITYL…YFGLVNTPVG (86 aa). A helical transmembrane segment spans residues 515-535; sequence ITGIIMVAFMLIAFTLASRRC. The Extracellular segment spans residues 536–557; sequence RRNLTKLPKPFDKLTGYNAFWY. Residues 558–578 traverse the membrane as a helical segment; the sequence is SHHLLLTVYVLLVIHGVSLYL. Residues 579–586 are Cytoplasmic-facing; the sequence is EHKWYRKT. The helical transmembrane segment at 587 to 604 threads the bilayer; that stretch reads VWMYLAVPVLLYVGERIF. Residues 605-731 lie on the Extracellular side of the membrane; it reads RFFRSRLYTV…PYGAPAQDHW (127 aa). Residues 609–729 form the FAD-binding FR-type domain; sequence SRLYTVEICK…DGPYGAPAQD (121 aa). The chain crosses the membrane as a helical span at residues 732–752; that stretch reads KYDVVLLVGLGIGATPFVSIL. The Cytoplasmic segment spans residues 753–941; the sequence is RDLLNNIIKQ…TRFDFHKEQF (189 aa).

The protein belongs to the RBOH (TC 5.B.1.3) family. Monomer and homodimer.

The protein localises to the membrane. Its function is as follows. Calcium-dependent NADPH oxidase that generates superoxide. The sequence is that of Probable respiratory burst oxidase homolog protein I (RBOHI) from Arabidopsis thaliana (Mouse-ear cress).